Here is a 179-residue protein sequence, read N- to C-terminus: Large ribosomal subunit protein uL5 (179 aa).

It belongs to the universal ribosomal protein uL5 family. As to quaternary structure, part of the 50S ribosomal subunit; part of the 5S rRNA/L5/L18/L25 subcomplex. Contacts the 5S rRNA and the P site tRNA. Forms a bridge to the 30S subunit in the 70S ribosome.

Functionally, this is one of the proteins that bind and probably mediate the attachment of the 5S RNA into the large ribosomal subunit, where it forms part of the central protuberance. In the 70S ribosome it contacts protein S13 of the 30S subunit (bridge B1b), connecting the 2 subunits; this bridge is implicated in subunit movement. Contacts the P site tRNA; the 5S rRNA and some of its associated proteins might help stabilize positioning of ribosome-bound tRNAs. This chain is Large ribosomal subunit protein uL5, found in Buchnera aphidicola subsp. Cinara cedri (strain Cc).